Reading from the N-terminus, the 103-residue chain is UPF0145 protein Rsph17025_2361 (103 aa).

It belongs to the UPF0145 family.

The sequence is that of UPF0145 protein Rsph17025_2361 from Cereibacter sphaeroides (strain ATCC 17025 / ATH 2.4.3) (Rhodobacter sphaeroides).